Here is a 292-residue protein sequence, read N- to C-terminus: tRNA (guanine-N(7)-)-methyltransferase (292 aa).

The disordered stretch occupies residues 1-52 (MGKIEATSKEEKLRVQKEAEARRRAYRDLKKEARQMQKEVKFDTDDNSELPK). Residues glycine 106, 129 to 130 (EI), 166 to 167 (NA), and cysteine 186 contribute to the S-adenosyl-L-methionine site. Aspartate 189 is an active-site residue. S-adenosyl-L-methionine is bound at residue 264 to 266 (TEE).

This sequence belongs to the class I-like SAM-binding methyltransferase superfamily. TrmB family. In terms of assembly, forms a complex with TRM82.

Its subcellular location is the nucleus. It catalyses the reaction guanosine(46) in tRNA + S-adenosyl-L-methionine = N(7)-methylguanosine(46) in tRNA + S-adenosyl-L-homocysteine. It participates in tRNA modification; N(7)-methylguanine-tRNA biosynthesis. Functionally, catalyzes the formation of N(7)-methylguanine at position 46 (m7G46) in tRNA. The sequence is that of tRNA (guanine-N(7)-)-methyltransferase from Debaryomyces hansenii (strain ATCC 36239 / CBS 767 / BCRC 21394 / JCM 1990 / NBRC 0083 / IGC 2968) (Yeast).